The primary structure comprises 186 residues: Peptidyl-tRNA hydrolase (186 aa).

Tyrosine 16 contributes to the tRNA binding site. Residue histidine 21 is the Proton acceptor of the active site. The tRNA site is built by tyrosine 60 and asparagine 62.

It belongs to the PTH family. Monomer.

The protein resides in the cytoplasm. The enzyme catalyses an N-acyl-L-alpha-aminoacyl-tRNA + H2O = an N-acyl-L-amino acid + a tRNA + H(+). Its function is as follows. Hydrolyzes ribosome-free peptidyl-tRNAs (with 1 or more amino acids incorporated), which drop off the ribosome during protein synthesis, or as a result of ribosome stalling. Functionally, catalyzes the release of premature peptidyl moieties from peptidyl-tRNA molecules trapped in stalled 50S ribosomal subunits, and thus maintains levels of free tRNAs and 50S ribosomes. In Tropheryma whipplei (strain Twist) (Whipple's bacillus), this protein is Peptidyl-tRNA hydrolase.